A 359-amino-acid chain; its full sequence is DNA polymerase IV (359 aa).

The region spanning 4–185 is the UmuC domain; sequence IIHIDMDCYF…LSLRKIPGVG (182 aa). 2 residues coordinate Mg(2+): Asp-8 and Asp-103. Residue Glu-104 is part of the active site.

This sequence belongs to the DNA polymerase type-Y family. In terms of assembly, monomer. The cofactor is Mg(2+).

The protein localises to the cytoplasm. It carries out the reaction DNA(n) + a 2'-deoxyribonucleoside 5'-triphosphate = DNA(n+1) + diphosphate. In terms of biological role, poorly processive, error-prone DNA polymerase involved in untargeted mutagenesis. Copies undamaged DNA at stalled replication forks, which arise in vivo from mismatched or misaligned primer ends. These misaligned primers can be extended by PolIV. Exhibits no 3'-5' exonuclease (proofreading) activity. May be involved in translesional synthesis, in conjunction with the beta clamp from PolIII. The sequence is that of DNA polymerase IV from Shewanella sp. (strain MR-7).